Consider the following 72-residue polypeptide: Small ribosomal subunit protein bS20 (72 aa).

This sequence belongs to the bacterial ribosomal protein bS20 family.

Functionally, binds directly to 16S ribosomal RNA. This Aeromonas hydrophila protein is Small ribosomal subunit protein bS20 (rpsT).